The primary structure comprises 336 residues: Phosphate acyltransferase (336 aa).

The protein belongs to the PlsX family. As to quaternary structure, homodimer. Probably interacts with PlsY.

The protein localises to the cytoplasm. The enzyme catalyses a fatty acyl-[ACP] + phosphate = an acyl phosphate + holo-[ACP]. The protein operates within lipid metabolism; phospholipid metabolism. Functionally, catalyzes the reversible formation of acyl-phosphate (acyl-PO(4)) from acyl-[acyl-carrier-protein] (acyl-ACP). This enzyme utilizes acyl-ACP as fatty acyl donor, but not acyl-CoA. This is Phosphate acyltransferase from Ectopseudomonas mendocina (strain ymp) (Pseudomonas mendocina).